The primary structure comprises 149 residues: L-alanine exporter AlaE (149 aa).

The next 4 membrane-spanning stretches (helical) occupy residues 16 to 36 (FAMVVYCSVVNMLIEIFLSGM), 46 to 66 (LVAIPVNILIAWPYGMYRDAI), 85 to 105 (VLAYVTFQSPVYVAILLTVGA), and 112 to 132 (AAVSSNIVISMLMGAVYGYFL).

It belongs to the AlaE exporter family.

Its subcellular location is the cell inner membrane. Its function is as follows. Exports L-alanine. The polypeptide is L-alanine exporter AlaE (Citrobacter koseri (strain ATCC BAA-895 / CDC 4225-83 / SGSC4696)).